Here is a 309-residue protein sequence, read N- to C-terminus: Uricase (309 aa).

Ala2 is subject to N-acetylalanine. Active-site charge relay system residues include Lys16 and Thr63. Urate contacts are provided by Thr63, Asp64, Phe165, Arg182, Val237, Gln238, and Asn264. The active-site Charge relay system is His266. The Microbody targeting signal motif lies at 307-309 (SKL).

This sequence belongs to the uricase family.

The protein resides in the peroxisome. The enzyme catalyses urate + O2 + H2O = 5-hydroxyisourate + H2O2. The protein operates within purine metabolism; urate degradation; (S)-allantoin from urate: step 1/3. Its function is as follows. Catalyzes the oxidation of uric acid to 5-hydroxyisourate, which is further processed to form (S)-allantoin. The polypeptide is Uricase (Arabidopsis thaliana (Mouse-ear cress)).